We begin with the raw amino-acid sequence, 240 residues long: Ribonuclease P protein component 3 (240 aa).

It belongs to the eukaryotic/archaeal RNase P protein component 3 family. Consists of a catalytic RNA component and at least 4-5 protein subunits.

The protein resides in the cytoplasm. The catalysed reaction is Endonucleolytic cleavage of RNA, removing 5'-extranucleotides from tRNA precursor.. In terms of biological role, part of ribonuclease P, a protein complex that generates mature tRNA molecules by cleaving their 5'-ends. The chain is Ribonuclease P protein component 3 from Halorubrum lacusprofundi (strain ATCC 49239 / DSM 5036 / JCM 8891 / ACAM 34).